We begin with the raw amino-acid sequence, 99 residues long: Nucleoid-associated protein EbfC (99 aa).

This sequence belongs to the YbaB/EbfC family. As to quaternary structure, homodimer. Can form tetramers and octamers in solution.

The protein localises to the cytoplasm. It is found in the nucleoid. In terms of biological role, binds to DNA and alters its conformation. May be involved in global regulation of gene expression. Binds specifically and non-specifically to DNA, preferentially to the 4 bp broken palindrome 5'-GTnAC-3'. Affects expression of a wide variety of genes, encoding both structural and metabolic proteins. The chain is Nucleoid-associated protein EbfC from Borreliella burgdorferi (strain ATCC 35210 / DSM 4680 / CIP 102532 / B31) (Borrelia burgdorferi).